The sequence spans 887 residues: Alanine--tRNA ligase (887 aa).

The Zn(2+) site is built by His-564, His-568, Cys-676, and His-680.

Belongs to the class-II aminoacyl-tRNA synthetase family. The cofactor is Zn(2+).

The protein localises to the cytoplasm. It carries out the reaction tRNA(Ala) + L-alanine + ATP = L-alanyl-tRNA(Ala) + AMP + diphosphate. Its function is as follows. Catalyzes the attachment of alanine to tRNA(Ala) in a two-step reaction: alanine is first activated by ATP to form Ala-AMP and then transferred to the acceptor end of tRNA(Ala). Also edits incorrectly charged Ser-tRNA(Ala) and Gly-tRNA(Ala) via its editing domain. The sequence is that of Alanine--tRNA ligase from Rhizobium meliloti (strain 1021) (Ensifer meliloti).